Consider the following 424-residue polypeptide: Serine--tRNA ligase (424 aa).

Residue 231–233 (TAE) coordinates L-serine. 262–264 (RSE) provides a ligand contact to ATP. Glu285 is an L-serine binding site. 349–352 (EISS) is an ATP binding site. An L-serine-binding site is contributed by Ser385.

This sequence belongs to the class-II aminoacyl-tRNA synthetase family. Type-1 seryl-tRNA synthetase subfamily. As to quaternary structure, homodimer. The tRNA molecule binds across the dimer.

Its subcellular location is the cytoplasm. The enzyme catalyses tRNA(Ser) + L-serine + ATP = L-seryl-tRNA(Ser) + AMP + diphosphate + H(+). It carries out the reaction tRNA(Sec) + L-serine + ATP = L-seryl-tRNA(Sec) + AMP + diphosphate + H(+). Its pathway is aminoacyl-tRNA biosynthesis; selenocysteinyl-tRNA(Sec) biosynthesis; L-seryl-tRNA(Sec) from L-serine and tRNA(Sec): step 1/1. In terms of biological role, catalyzes the attachment of serine to tRNA(Ser). Is also able to aminoacylate tRNA(Sec) with serine, to form the misacylated tRNA L-seryl-tRNA(Sec), which will be further converted into selenocysteinyl-tRNA(Sec). This chain is Serine--tRNA ligase, found in Bacillus cytotoxicus (strain DSM 22905 / CIP 110041 / 391-98 / NVH 391-98).